The following is a 320-amino-acid chain: Citrate synthase (320 aa).

Residues histidine 249 and aspartate 307 contribute to the active site.

This sequence belongs to the citrate synthase family.

The enzyme catalyses oxaloacetate + acetyl-CoA + H2O = citrate + CoA + H(+). The protein operates within carbohydrate metabolism; tricarboxylic acid cycle; isocitrate from oxaloacetate: step 1/2. This chain is Citrate synthase (gltA), found in Bartonella doshiae.